A 610-amino-acid polypeptide reads, in one-letter code: F-box/LRR-repeat protein 4 (610 aa).

Residues 5 to 52 (DRINNCLPEELILEIFRRLESKPNRDACSLVCKRWLSLERFSRTTLRI) enclose the F-box domain. 19 LRR repeats span residues 53–79 (GASF…HVDE), 124–149 (SSSL…SLIW), 150–175 (CPNV…DLQG), 178–200 (VGDQ…NLRF), 201–227 (CEGL…GVAA), 228–253 (SAKI…YLDS), 256–277 (IHDK…LKLQ), 278–303 (CVSV…ALYS), 304–329 (FQHF…TLSD), 330–355 (CYFV…EING), 356–381 (CHNI…ALLY), 382–407 (CQRI…HLVD), 408–433 (CSGI…HIRR), 434–459 (CYEI…SLRF), 460–484 (CDKV…NVSG), 485–510 (CNQI…DISV), 511–536 (LQNI…VLSH), 537–562 (CHHI…HMVY), and 563–588 (CPGI…LIEK). Positions 88–125 (LSPSPKRKRGRDSSSPSSSKRKKLTDKTHSGAENVESS) are disordered.

The protein is F-box/LRR-repeat protein 4 (FBL4) of Arabidopsis thaliana (Mouse-ear cress).